A 141-amino-acid polypeptide reads, in one-letter code: Cystatin (141 aa).

The signal sequence occupies residues 1 to 26; that stretch reads MVHSQLPVAASLRLLCALLLLPSATM. Residues 29–129 form the Cystatin domain; sequence GGLSPRSVTD…CRFQVWSRPW (101 aa). A Secondary area of contact motif is present at residues 73-77; that stretch reads QVVAG. Cystine bridges form between Cys91-Cys107 and Cys120-Cys140.

This sequence belongs to the cystatin family. Expressed by the venom gland at an extremely low level (at protein level).

The protein localises to the secreted. In terms of biological role, inhibits various C1 cysteine proteases including cathepsin L, papain and cathepsin B. This protein has no toxic activity and its function in the venom is unknown. It may play a role as a housekeeping or regulatory protein. This Cryptophis nigrescens (Eastern small-eyed snake) protein is Cystatin.